The primary structure comprises 286 residues: Release factor glutamine methyltransferase (286 aa).

Residues 120 to 124 (GTGSG), Asp-143, Trp-172, and Asn-187 each bind S-adenosyl-L-methionine. 187–190 (NPPY) contacts substrate.

Belongs to the protein N5-glutamine methyltransferase family. PrmC subfamily.

The enzyme catalyses L-glutaminyl-[peptide chain release factor] + S-adenosyl-L-methionine = N(5)-methyl-L-glutaminyl-[peptide chain release factor] + S-adenosyl-L-homocysteine + H(+). Functionally, methylates the class 1 translation termination release factors RF1/PrfA and RF2/PrfB on the glutamine residue of the universally conserved GGQ motif. This chain is Release factor glutamine methyltransferase, found in Gloeobacter violaceus (strain ATCC 29082 / PCC 7421).